Reading from the N-terminus, the 138-residue chain is MRALWIMAVLLLGVEGHLMQFENMIKKVTGRSGIWWYGSYGCYCGKGGQGLPQDASDRCCFVHDCCYGKVNGCDPKDDFYVYSSENRDIVCGEDNPCTKEICECDKAAAICFRDNMDTYQNKYWFYPSSNCNEESEPC.

The signal sequence occupies residues 1–16 (MRALWIMAVLLLGVEG). 7 cysteine pairs are disulfide-bonded: Cys42-Cys131, Cys44-Cys60, Cys59-Cys111, Cys65-Cys138, Cys66-Cys104, Cys73-Cys97, and Cys91-Cys102. Positions 43, 45, and 47 each coordinate Ca(2+). His63 is a catalytic residue. Asp64 serves as a coordination point for Ca(2+). The active site involves Asp105.

The cofactor is Ca(2+). In terms of tissue distribution, expressed by the venom gland.

The protein localises to the secreted. It carries out the reaction a 1,2-diacyl-sn-glycero-3-phosphocholine + H2O = a 1-acyl-sn-glycero-3-phosphocholine + a fatty acid + H(+). Functionally, snake venom phospholipase A2 (PLA2) that shows a moderate inhibition of ADP-induced human platelet aggregation when tested on platelet rich plasma. Exhibits high hydrolytic activities and prefers the anionic micelles (dPPC with deoxycholate) to the zwitterionic micelles (dPPC with Triton X-100). PLA2 catalyzes the calcium-dependent hydrolysis of the 2-acyl groups in 3-sn-phosphoglycerides. The protein is Acidic phospholipase A2 Ts-A6 of Trimeresurus stejnegeri (Chinese green tree viper).